The following is a 101-amino-acid chain: Small ribosomal subunit protein bS18c (101 aa).

The span at 1–19 (MNKSKRPFTKSKRSFRRRL) shows a compositional bias: basic residues. The interval 1 to 20 (MNKSKRPFTKSKRSFRRRLP) is disordered.

The protein belongs to the bacterial ribosomal protein bS18 family. In terms of assembly, part of the 30S ribosomal subunit.

The protein resides in the plastid. It localises to the chloroplast. This chain is Small ribosomal subunit protein bS18c, found in Arabis hirsuta (Hairy rock-cress).